We begin with the raw amino-acid sequence, 655 residues long: p-hydroxybenzoic acid efflux pump subunit AaeB (655 aa).

The next 11 helical transmembrane spans lie at 13-33 (FAVK…HFQL), 38-58 (WAVL…GGEP), 69-89 (LRII…ISMI), 93-113 (LLMI…SSLV), 121-141 (WGLS…EPLL), 152-172 (EIVI…PRSI), 370-390 (LFWL…IAVV), 407-427 (FIYG…VIIP), 431-451 (QSML…GIEV), 459-479 (MGAL…TFHF), and 482-502 (FLDS…VILL).

The protein belongs to the aromatic acid exporter ArAE (TC 2.A.85) family.

The protein localises to the cell inner membrane. Its function is as follows. Forms an efflux pump with AaeA. Could function as a metabolic relief valve, allowing to eliminate certain compounds when they accumulate to high levels in the cell. In Salmonella arizonae (strain ATCC BAA-731 / CDC346-86 / RSK2980), this protein is p-hydroxybenzoic acid efflux pump subunit AaeB.